Here is an 88-residue protein sequence, read N- to C-terminus: DNA-directed RNA polymerase subunit omega (88 aa).

Belongs to the RNA polymerase subunit omega family. The RNAP catalytic core consists of 2 alpha, 1 beta, 1 beta' and 1 omega subunit. When a sigma factor is associated with the core the holoenzyme is formed, which can initiate transcription.

It carries out the reaction RNA(n) + a ribonucleoside 5'-triphosphate = RNA(n+1) + diphosphate. Promotes RNA polymerase assembly. Latches the N- and C-terminal regions of the beta' subunit thereby facilitating its interaction with the beta and alpha subunits. This Salinispora tropica (strain ATCC BAA-916 / DSM 44818 / JCM 13857 / NBRC 105044 / CNB-440) protein is DNA-directed RNA polymerase subunit omega.